The following is a 422-amino-acid chain: Biofilm regulator 1 (422 aa).

Composition is skewed to low complexity over residues 1-19 (MSSS…TTSA) and 36-45 (SGGSNNGNGS). Disordered regions lie at residues 1-86 (MSSS…KCPP) and 116-207 (RLSS…PSHP). Polar residues predominate over residues 46 to 61 (ALKSQISPRLSDTSRI). Low complexity-rich tracts occupy residues 69–81 (TSGS…SSTP) and 120–143 (PTLP…LSPV). The span at 146 to 159 (VINTPPQQPQSVSA) shows a compositional bias: polar residues. The segment covering 160–194 (STSPNTQYQYYQYQQQSSPIQQQQQQQQATPAATP) has biased composition (low complexity). A compositionally biased stretch (polar residues) spans 195–205 (TVMQMAQNQPS). The GATA-type zinc finger occupies 282–307 (CHRCGTTETPEWRRGPKGVRTLCNAC).

In terms of assembly, interacts with HDA1.

The protein localises to the nucleus. Its function is as follows. Transcription factor required for hyphal growth, biofilm formation, and virulence. Promotes formation of both conventional and pheromone-stimulated biofilms. Binds and recruits HDA1 to promoters of hypha-specific genes in a rapamycin-dependent manner. Involved in the switch between two heritable states, the white and opaque states. These two cell types differ in many characteristics, including cell structure, mating competence, and virulence. Each state is heritable for many generations, and switching between states occurs stochastically at low frequency. The sequence is that of Biofilm regulator 1 (BRG1) from Candida albicans (strain SC5314 / ATCC MYA-2876) (Yeast).